The following is a 250-amino-acid chain: Agamous-like MADS-box protein AGL8 homolog (250 aa).

Residues 3–57 (RGRVQLKRIENKINRQVTFSKRRSGLLKKAHEISVLCDAEVGLIVFSTKGKLFEY) enclose the MADS-box domain. Residues 88–178 (PGSWTLEHAK…SKKVKEREKE (91 aa)) form the K-box domain.

In terms of tissue distribution, abundant in vegetative organs.

It is found in the nucleus. Functionally, probable transcription factor. The sequence is that of Agamous-like MADS-box protein AGL8 homolog from Solanum tuberosum (Potato).